We begin with the raw amino-acid sequence, 292 residues long: Fat storage-inducing transmembrane protein 1 (292 aa).

The Lumenal segment spans residues 1–18 (MERGPVVGAGRGAGARIR). Residues 19–39 (ALLGGLVRVLLWVASALLYFG) form a helical membrane-spanning segment. The Cytoplasmic portion of the chain corresponds to 40-54 (SEQAARLLGSPCLRR). The helical transmembrane segment at 55 to 75 (LYHAWLAAVVIFGPLLQFHVN) threads the bilayer. The Lumenal portion of the chain corresponds to 76–94 (PRTIFASHGNFFNIKFVNS). A helical membrane pass occupies residues 95 to 115 (AWGWTCTFLGGFVLLVVFLAT). Residues 116-141 (RRVAVTARHLSRLVVGAAVWRGAGRA) are Cytoplasmic-facing. Residues 142–162 (FLLIEDLTGSCFEPLPQGLLL) form a helical membrane-spanning segment. Over 163–187 (HELPDRRSCLAAGHQWRGYTVSSHT) the chain is Lumenal. His-186 is a catalytic residue. Residues 188–208 (FLLTFCCLLMAEEAAVFAKYL) traverse the membrane as a helical segment. Residues 209-220 (AHGLPAGAPLRL) lie on the Cytoplasmic side of the membrane. Residues 221-241 (VFLLNVLLLGLWNFLLLCTVI) form a helical membrane-spanning segment. Over 242–249 (YFHQYTHK) the chain is Lumenal. His-244 is a catalytic residue. Residues 250-270 (VVGAAVGTFAWYLTYGSWYHQ) form a helical membrane-spanning segment. At 271–292 (PWSPGSPGHGLFPRPHSIHKHN) the chain is on the cytoplasmic side.

This sequence belongs to the FIT family. FIT1 subfamily.

The protein resides in the endoplasmic reticulum membrane. Functionally, plays an important role in the formation of lipid droplets (LDs) which are storage organelles at the center of lipid and energy homeostasis. Directly binds to diacylglycerol (DAGs) and triacylglycerol. The protein is Fat storage-inducing transmembrane protein 1 of Bos taurus (Bovine).